We begin with the raw amino-acid sequence, 258 residues long: Sec-independent protein translocase protein TatC (258 aa).

Topologically, residues 2–23 (SVEDTQPLITHLIELRKRLLNC) are cytoplasmic. A helical transmembrane segment spans residues 24–44 (IISVIVIFLCLVYFANDIYHL). The Periplasmic segment spans residues 45–75 (VSAPLIKQLPQGSTMIATDVASPFFTPIKLT). A helical transmembrane segment spans residues 76–96 (FMVSLILSAPVILYQVWAFIA). The Cytoplasmic portion of the chain corresponds to 97-115 (PALYKHERRLVVPLLVSSS). A helical membrane pass occupies residues 116-136 (LLFYIGMAFAYFVVFPLAFGF). The Periplasmic segment spans residues 137–156 (LANTAPEGVQVSTDIASYLS). A helical transmembrane segment spans residues 157–177 (FVMALFMAFGVSFEVPVAIVL). Residues 178 to 192 (LCWMGITSPEDLRKK) are Cytoplasmic-facing. A helical transmembrane segment spans residues 193-210 (RPYVLVGAFVVGMLLTPP). Residue aspartate 211 is a topological domain, periplasmic. Residues 212–232 (VFSQTLLAIPMYCLFEIGVFF) traverse the membrane as a helical segment. Over 233–258 (SRFYVGKGRNREEENDAEAESEKTEE) the chain is Cytoplasmic.

Belongs to the TatC family. The Tat system comprises two distinct complexes: a TatABC complex, containing multiple copies of TatA, TatB and TatC subunits, and a separate TatA complex, containing only TatA subunits. Substrates initially bind to the TatABC complex, which probably triggers association of the separate TatA complex to form the active translocon.

It is found in the cell inner membrane. Part of the twin-arginine translocation (Tat) system that transports large folded proteins containing a characteristic twin-arginine motif in their signal peptide across membranes. Together with TatB, TatC is part of a receptor directly interacting with Tat signal peptides. This Escherichia coli O6:H1 (strain CFT073 / ATCC 700928 / UPEC) protein is Sec-independent protein translocase protein TatC.